Here is a 255-residue protein sequence, read N- to C-terminus: tRNA pseudouridine synthase A (255 aa).

Residue Asp52 is the Nucleophile of the active site. Tyr111 provides a ligand contact to substrate.

It belongs to the tRNA pseudouridine synthase TruA family. In terms of assembly, homodimer.

It catalyses the reaction uridine(38/39/40) in tRNA = pseudouridine(38/39/40) in tRNA. In terms of biological role, formation of pseudouridine at positions 38, 39 and 40 in the anticodon stem and loop of transfer RNAs. The polypeptide is tRNA pseudouridine synthase A (Cereibacter sphaeroides (strain ATCC 17029 / ATH 2.4.9) (Rhodobacter sphaeroides)).